Consider the following 699-residue polypeptide: Elongation factor G (699 aa).

Residues Glu-8–Ile-283 enclose the tr-type G domain. Residues Ala-17–Thr-24, Asp-81–His-85, and Asn-135–Asp-138 contribute to the GTP site.

It belongs to the TRAFAC class translation factor GTPase superfamily. Classic translation factor GTPase family. EF-G/EF-2 subfamily.

It is found in the cytoplasm. Functionally, catalyzes the GTP-dependent ribosomal translocation step during translation elongation. During this step, the ribosome changes from the pre-translocational (PRE) to the post-translocational (POST) state as the newly formed A-site-bound peptidyl-tRNA and P-site-bound deacylated tRNA move to the P and E sites, respectively. Catalyzes the coordinated movement of the two tRNA molecules, the mRNA and conformational changes in the ribosome. This is Elongation factor G from Rickettsia africae (strain ESF-5).